Reading from the N-terminus, the 353-residue chain is Heterogeneous nuclear ribonucleoprotein D0 (353 aa).

Positions 1-89 are disordered; that stretch reads MSEEQFGGDG…SSPRHTEAAT (89 aa). An N-acetylserine modification is found at serine 2. Positions 11-42 are enriched in low complexity; sequence AAAAATAAVGGSAGEQEGAMVAAAQGAAAAAG. A compositionally biased stretch (gly residues) spans 43–56; the sequence is SGSGGGSAPGGTEG. Basic and acidic residues predominate over residues 62-71; it reads EGAKIDASKN. Serine 69 is modified (phosphoserine). Lysine 70 participates in a covalent cross-link: Glycyl lysine isopeptide (Lys-Gly) (interchain with G-Cter in SUMO2). 3 positions are modified to phosphoserine: serine 78, serine 80, and serine 81. A Phosphothreonine modification is found at threonine 89. 2 consecutive RRM domains span residues 95–177 and 180–259; these read WKMF…KTKE and KKIF…MSKE. Lysine 117 is subject to N6-methyllysine. A Phosphothreonine modification is found at threonine 125. A Glycyl lysine isopeptide (Lys-Gly) (interchain with G-Cter in SUMO2) cross-link involves residue lysine 127. Lysine 163 bears the N6-acetyllysine mark. Serine 188 is subject to Phosphoserine. Threonine 191 carries the post-translational modification Phosphothreonine. Residue lysine 195 forms a Glycyl lysine isopeptide (Lys-Gly) (interchain with G-Cter in SUMO2) linkage. 2 positions are modified to N6-acetyllysine: lysine 241 and lysine 249. Serine 269 is modified (phosphoserine). Residues arginine 270, arginine 276, arginine 278, and arginine 280 each carry the omega-N-methylarginine modification. Arginine 343 carries the post-translational modification Asymmetric dimethylarginine; alternate. Residue arginine 343 is modified to Dimethylated arginine; alternate. An Omega-N-methylarginine; alternate modification is found at arginine 343.

Identified in a IGF2BP1-dependent mRNP granule complex containing untranslated mRNAs. Part of a complex associated with the FOS mCRD domain and consisting of PABPC1, PAIP1, CSDE1/UNR and SYNCRIP. Interacts with IGF2BP2. Interacts with GTPBP1. Interacts with EIF4G1; the interaction requires RNA. Interacts with EIF3B and RPS3. Post-translationally, methylated by PRMT1, in an insulin-dependent manner. The PRMT1-mediated methylation regulates its phosphorylation. Arg-343 is dimethylated, probably to asymmetric dimethylarginine.

It localises to the nucleus. It is found in the cytoplasm. Binds with high affinity to RNA molecules that contain AU-rich elements (AREs) found within the 3'-UTR of many proto-oncogenes and cytokine mRNAs. Also binds to double- and single-stranded DNA sequences in a specific manner and functions a transcription factor. Each of the RNA-binding domains specifically can bind solely to a single-stranded non-monotonous 5'-UUAG-3' sequence and also weaker to the single-stranded 5'-TTAGGG-3' telomeric DNA repeat. Binds RNA oligonucleotides with 5'-UUAGGG-3' repeats more tightly than the telomeric single-stranded DNA 5'-TTAGGG-3' repeats. Binding of RRM1 to DNA inhibits the formation of DNA quadruplex structure which may play a role in telomere elongation. May be involved in translationally coupled mRNA turnover. Implicated with other RNA-binding proteins in the cytoplasmic deadenylation/translational and decay interplay of the FOS mRNA mediated by the major coding-region determinant of instability (mCRD) domain. May play a role in the regulation of the rhythmic expression of circadian clock core genes. Directly binds to the 3'UTR of CRY1 mRNA and induces CRY1 rhythmic translation. May also be involved in the regulation of PER2 translation. The chain is Heterogeneous nuclear ribonucleoprotein D0 (Hnrnpd) from Rattus norvegicus (Rat).